A 171-amino-acid polypeptide reads, in one-letter code: Ribosome maturation factor RimM (171 aa).

In terms of domain architecture, PRC barrel spans 96–170 (AEGEYYYHEI…LVTIHVTEGL (75 aa)).

The protein belongs to the RimM family. As to quaternary structure, binds ribosomal protein uS19.

The protein localises to the cytoplasm. An accessory protein needed during the final step in the assembly of 30S ribosomal subunit, possibly for assembly of the head region. Essential for efficient processing of 16S rRNA. May be needed both before and after RbfA during the maturation of 16S rRNA. It has affinity for free ribosomal 30S subunits but not for 70S ribosomes. This chain is Ribosome maturation factor RimM, found in Bacillus anthracis (strain A0248).